Here is a 342-residue protein sequence, read N- to C-terminus: S-adenosylmethionine:tRNA ribosyltransferase-isomerase (342 aa).

It belongs to the QueA family. In terms of assembly, monomer.

The protein localises to the cytoplasm. It carries out the reaction 7-aminomethyl-7-carbaguanosine(34) in tRNA + S-adenosyl-L-methionine = epoxyqueuosine(34) in tRNA + adenine + L-methionine + 2 H(+). It participates in tRNA modification; tRNA-queuosine biosynthesis. Its function is as follows. Transfers and isomerizes the ribose moiety from AdoMet to the 7-aminomethyl group of 7-deazaguanine (preQ1-tRNA) to give epoxyqueuosine (oQ-tRNA). This chain is S-adenosylmethionine:tRNA ribosyltransferase-isomerase, found in Bacillus licheniformis (strain ATCC 14580 / DSM 13 / JCM 2505 / CCUG 7422 / NBRC 12200 / NCIMB 9375 / NCTC 10341 / NRRL NRS-1264 / Gibson 46).